We begin with the raw amino-acid sequence, 327 residues long: Sphingomyelinase D (327 aa).

Positions 1–23 are cleaved as a signal peptide; the sequence is MQPLTRTICALFCLLLTLPLTFG. His52 is a catalytic residue. Residues Glu72, Asp74, and Asp117 each contribute to the Mg(2+) site. Residues 320–327 carry the SMD-tail motif; sequence VTGADKLW.

It belongs to the sphingomyelinase D/phospholipase D family. The cofactor is Mg(2+).

The protein localises to the secreted. The enzyme catalyses a sphingomyelin + H2O = an N-acylsphing-4-enine 1-phosphate + choline + H(+). Functionally, catalyzes the hydrolysis of sphingomyelin. Sphingomyelinases D are produced by some spider in their venoms, but also by arthropods such as ticks, or pathogenic bacteria and fungi. They might play a role in pathogenicity through different mechanisms, such as membrane destabilization and host cell penetration, but also pulmonary inflammation and cutaneous lesions. The sequence is that of Sphingomyelinase D from Paracoccidioides brasiliensis (strain Pb03).